A 301-amino-acid polypeptide reads, in one-letter code: Bifunctional protein FolD (301 aa).

NADP(+) is bound by residues 164–166 (GRS), S191, and I232.

It belongs to the tetrahydrofolate dehydrogenase/cyclohydrolase family. As to quaternary structure, homodimer.

It catalyses the reaction (6R)-5,10-methylene-5,6,7,8-tetrahydrofolate + NADP(+) = (6R)-5,10-methenyltetrahydrofolate + NADPH. It carries out the reaction (6R)-5,10-methenyltetrahydrofolate + H2O = (6R)-10-formyltetrahydrofolate + H(+). The protein operates within one-carbon metabolism; tetrahydrofolate interconversion. In terms of biological role, catalyzes the oxidation of 5,10-methylenetetrahydrofolate to 5,10-methenyltetrahydrofolate and then the hydrolysis of 5,10-methenyltetrahydrofolate to 10-formyltetrahydrofolate. The polypeptide is Bifunctional protein FolD (Borreliella afzelii (strain PKo) (Borrelia afzelii)).